The chain runs to 80 residues: Exodeoxyribonuclease 7 small subunit (80 aa).

Belongs to the XseB family. Heterooligomer composed of large and small subunits.

The protein resides in the cytoplasm. The enzyme catalyses Exonucleolytic cleavage in either 5'- to 3'- or 3'- to 5'-direction to yield nucleoside 5'-phosphates.. In terms of biological role, bidirectionally degrades single-stranded DNA into large acid-insoluble oligonucleotides, which are then degraded further into small acid-soluble oligonucleotides. The protein is Exodeoxyribonuclease 7 small subunit of Rickettsia bellii (strain OSU 85-389).